Here is a 493-residue protein sequence, read N- to C-terminus: Gamma-aminobutyric acid receptor subunit alpha-3 (493 aa).

A signal peptide spans 1 to 28; that stretch reads MITTQMWHFYVTRVGLLLLISILPGTTG. The interval 27 to 54 is disordered; that stretch reads TGQGESRRQEPGDFVKQDIGGLSPKHAP. At 29-276 the chain is on the extracellular side; sequence QGESRRQEPG…THFHLKRKIG (248 aa). Basic and acidic residues predominate over residues 31–42; it reads ESRRQEPGDFVK. Asn63 is a glycosylation site (N-linked (GlcNAc...) asparagine). 4-aminobutanoate is bound at residue Arg119. N-linked (GlcNAc...) asparagine glycans are attached at residues Asn163 and Asn176. 4-aminobutanoate is bound at residue Thr182. Cys191 and Cys205 are oxidised to a cystine. Residue Asn228 is glycosylated (N-linked (GlcNAc...) asparagine). The next 3 membrane-spanning stretches (helical) occupy residues 277–298, 304–325, and 338–359; these read YFVI…VSFW, VPAR…SISA, and MDWF…FATV. At 360–458 the chain is on the cytoplasmic side; sequence NYFTKRSWAW…TYNSVSKVDK (99 aa). Ser427 carries the phosphoserine modification. Thr428 carries the phosphothreonine modification. Residues Ser434 and Ser443 each carry the phosphoserine modification. The helical transmembrane segment at 459 to 480 threads the bilayer; the sequence is ISRIIFPVLFAIFNLVYWATYV.

Belongs to the ligand-gated ion channel (TC 1.A.9) family. Gamma-aminobutyric acid receptor (TC 1.A.9.5) subfamily. GABRA3 sub-subfamily. Heteropentamer, formed by a combination of alpha (GABRA1-6), beta (GABRB1-3), gamma (GABRG1-3), delta (GABRD), epsilon (GABRE), rho (GABRR1-3), pi (GABRP) and theta (GABRQ) chains, each subunit exhibiting distinct physiological and pharmacological properties. Binds UBQLN1. Interacts with GPHN. As to expression, expressed in most brain regions. Expressed in lungs, in alveolar epithelium.

Its subcellular location is the postsynaptic cell membrane. It is found in the cell membrane. It carries out the reaction chloride(in) = chloride(out). Functionally, alpha subunit of the heteropentameric ligand-gated chloride channel gated by gamma-aminobutyric acid (GABA), a major inhibitory neurotransmitter in the brain. GABA-gated chloride channels, also named GABA(A) receptors (GABAAR), consist of five subunits arranged around a central pore and contain GABA active binding site(s) located at the alpha and beta subunit interface(s). When activated by GABA, GABAARs selectively allow the flow of chloride anions across the cell membrane down their electrochemical gradient. Chloride influx into the postsynaptic neuron following GABAAR opening decreases the neuron ability to generate a new action potential, thereby reducing nerve transmission. The protein is Gamma-aminobutyric acid receptor subunit alpha-3 of Rattus norvegicus (Rat).